A 204-amino-acid chain; its full sequence is N-(5'-phosphoribosyl)anthranilate isomerase (204 aa).

Belongs to the TrpF family.

It catalyses the reaction N-(5-phospho-beta-D-ribosyl)anthranilate = 1-(2-carboxyphenylamino)-1-deoxy-D-ribulose 5-phosphate. Its pathway is amino-acid biosynthesis; L-tryptophan biosynthesis; L-tryptophan from chorismate: step 3/5. The sequence is that of N-(5'-phosphoribosyl)anthranilate isomerase from Bacillus thuringiensis (strain Al Hakam).